The following is a 159-amino-acid chain: SsrA-binding protein (159 aa).

A disordered region spans residues 138–159; that stretch reads KRDTLKDKDWQRQKERMMKHSV.

This sequence belongs to the SmpB family.

The protein localises to the cytoplasm. Required for rescue of stalled ribosomes mediated by trans-translation. Binds to transfer-messenger RNA (tmRNA), required for stable association of tmRNA with ribosomes. tmRNA and SmpB together mimic tRNA shape, replacing the anticodon stem-loop with SmpB. tmRNA is encoded by the ssrA gene; the 2 termini fold to resemble tRNA(Ala) and it encodes a 'tag peptide', a short internal open reading frame. During trans-translation Ala-aminoacylated tmRNA acts like a tRNA, entering the A-site of stalled ribosomes, displacing the stalled mRNA. The ribosome then switches to translate the ORF on the tmRNA; the nascent peptide is terminated with the 'tag peptide' encoded by the tmRNA and targeted for degradation. The ribosome is freed to recommence translation, which seems to be the essential function of trans-translation. This is SsrA-binding protein from Alteromonas mediterranea (strain DSM 17117 / CIP 110805 / LMG 28347 / Deep ecotype).